A 701-amino-acid polypeptide reads, in one-letter code: Conserved oligomeric Golgi complex subunit 1 (701 aa).

The protein belongs to the COG1 family. As to quaternary structure, component of the conserved oligomeric Golgi (COG) complex which consists of eight different proteins cog1-cog8.

The protein resides in the cytoplasm. It localises to the nucleus. It is found in the golgi apparatus membrane. Functionally, acts as essential component of the peripheral membrane COG complex that is involved in intra-Golgi protein trafficking. COG is located at the cis-Golgi, and regulates tethering of retrograde intra-Golgi vesicles and possibly a number of other membrane trafficking events. The polypeptide is Conserved oligomeric Golgi complex subunit 1 (cog1) (Schizosaccharomyces pombe (strain 972 / ATCC 24843) (Fission yeast)).